The following is a 466-amino-acid chain: Probable ribonuclease FAU-1 (466 aa).

The 63-residue stretch at 90-152 (GAIYAGTVTD…TDGRPVLDTT (63 aa)) folds into the S1 motif domain.

It belongs to the FAU-1 family.

Functionally, probable RNase involved in rRNA stability through maturation and/or degradation of precursor rRNAs. Binds to RNA in loop regions with AU-rich sequences. This is Probable ribonuclease FAU-1 from Haloarcula marismortui (strain ATCC 43049 / DSM 3752 / JCM 8966 / VKM B-1809) (Halobacterium marismortui).